The chain runs to 83 residues: MGTVPELASLSFEEALKELENVVRRLESGEAPLDESIELYARGDALRAHCQARLDAAQARIEAIVADRDGKAQGLRPFDETVG.

The protein belongs to the XseB family. Heterooligomer composed of large and small subunits.

The protein localises to the cytoplasm. The catalysed reaction is Exonucleolytic cleavage in either 5'- to 3'- or 3'- to 5'-direction to yield nucleoside 5'-phosphates.. Its function is as follows. Bidirectionally degrades single-stranded DNA into large acid-insoluble oligonucleotides, which are then degraded further into small acid-soluble oligonucleotides. The polypeptide is Exodeoxyribonuclease 7 small subunit (Novosphingobium aromaticivorans (strain ATCC 700278 / DSM 12444 / CCUG 56034 / CIP 105152 / NBRC 16084 / F199)).